We begin with the raw amino-acid sequence, 115 residues long: NAD(P)H-quinone oxidoreductase subunit M (115 aa).

The protein belongs to the complex I NdhM subunit family. As to quaternary structure, NDH-1 can be composed of about 15 different subunits; different subcomplexes with different compositions have been identified which probably have different functions.

It localises to the cellular thylakoid membrane. The catalysed reaction is a plastoquinone + NADH + (n+1) H(+)(in) = a plastoquinol + NAD(+) + n H(+)(out). The enzyme catalyses a plastoquinone + NADPH + (n+1) H(+)(in) = a plastoquinol + NADP(+) + n H(+)(out). NDH-1 shuttles electrons from an unknown electron donor, via FMN and iron-sulfur (Fe-S) centers, to quinones in the respiratory and/or the photosynthetic chain. The immediate electron acceptor for the enzyme in this species is believed to be plastoquinone. Couples the redox reaction to proton translocation, and thus conserves the redox energy in a proton gradient. Cyanobacterial NDH-1 also plays a role in inorganic carbon-concentration. The protein is NAD(P)H-quinone oxidoreductase subunit M of Synechococcus sp. (strain WH7803).